Consider the following 348-residue polypeptide: UPF0283 membrane protein HAPS_0079 (348 aa).

3 consecutive transmembrane segments (helical) span residues 57–77 (FLAA…QWLI), 86–106 (IYFA…GAII), and 203–223 (ENAI…MVAW).

Belongs to the UPF0283 family.

Its subcellular location is the cell inner membrane. The chain is UPF0283 membrane protein HAPS_0079 from Glaesserella parasuis serovar 5 (strain SH0165) (Haemophilus parasuis).